We begin with the raw amino-acid sequence, 288 residues long: Pantothenate synthetase (288 aa).

35-42 is a binding site for ATP; that stretch reads MGALHDGH. The active-site Proton donor is histidine 42. Glutamine 66 lines the (R)-pantoate pocket. Glutamine 66 serves as a coordination point for beta-alanine. ATP is bound at residue 152 to 155; it reads GEKD. Glutamine 158 contacts (R)-pantoate. Residues glycine 181 and 189–192 each bind ATP; that span reads LSSR.

This sequence belongs to the pantothenate synthetase family. As to quaternary structure, homodimer.

Its subcellular location is the cytoplasm. The enzyme catalyses (R)-pantoate + beta-alanine + ATP = (R)-pantothenate + AMP + diphosphate + H(+). It participates in cofactor biosynthesis; (R)-pantothenate biosynthesis; (R)-pantothenate from (R)-pantoate and beta-alanine: step 1/1. Its function is as follows. Catalyzes the condensation of pantoate with beta-alanine in an ATP-dependent reaction via a pantoyl-adenylate intermediate. This chain is Pantothenate synthetase, found in Maricaulis maris (strain MCS10) (Caulobacter maris).